A 1415-amino-acid chain; its full sequence is DNA-directed RNA polymerase subunit beta' (1415 aa).

Zn(2+) is bound by residues C69, C71, C84, and C87. Residues D461, D463, and D465 each coordinate Mg(2+). Zn(2+)-binding residues include C805, C879, C886, and C889.

It belongs to the RNA polymerase beta' chain family. As to quaternary structure, the RNAP catalytic core consists of 2 alpha, 1 beta, 1 beta' and 1 omega subunit. When a sigma factor is associated with the core the holoenzyme is formed, which can initiate transcription. Requires Mg(2+) as cofactor. Zn(2+) serves as cofactor.

It carries out the reaction RNA(n) + a ribonucleoside 5'-triphosphate = RNA(n+1) + diphosphate. Functionally, DNA-dependent RNA polymerase catalyzes the transcription of DNA into RNA using the four ribonucleoside triphosphates as substrates. The sequence is that of DNA-directed RNA polymerase subunit beta' from Anaplasma marginale (strain Florida).